Reading from the N-terminus, the 508-residue chain is Photosystem II CP47 reaction center protein (508 aa).

6 consecutive transmembrane segments (helical) span residues 21–36 (SVHLMHTALVSGWAGS), 101–115 (IILSGLLFLAAIWHW), 140–156 (GVHLFLSGALCLAFGVF), 203–218 (IAAGLLGLIAGGFHVL), 237–252 (VLSSSIAAVFWSAFVV), and 457–472 (SFALIFFFGHIWHGAR).

The protein belongs to the PsbB/PsbC family. PsbB subfamily. PSII is composed of 1 copy each of membrane proteins PsbA, PsbB, PsbC, PsbD, PsbE, PsbF, PsbH, PsbI, PsbJ, PsbK, PsbL, PsbM, PsbT, PsbY, PsbZ, Psb30/Ycf12, at least 3 peripheral proteins of the oxygen-evolving complex and a large number of cofactors. It forms dimeric complexes. The cofactor is Binds multiple chlorophylls. PSII binds additional chlorophylls, carotenoids and specific lipids..

The protein localises to the plastid. It is found in the chloroplast thylakoid membrane. Functionally, one of the components of the core complex of photosystem II (PSII). It binds chlorophyll and helps catalyze the primary light-induced photochemical processes of PSII. PSII is a light-driven water:plastoquinone oxidoreductase, using light energy to abstract electrons from H(2)O, generating O(2) and a proton gradient subsequently used for ATP formation. The protein is Photosystem II CP47 reaction center protein of Euglena gracilis.